A 190-amino-acid chain; its full sequence is Inosine triphosphate pyrophosphatase (190 aa).

8-13 is an ITP binding site; the sequence is TGNANK. Residue Glu37 coordinates Mg(2+). ITP is bound by residues Lys49, 65–66, Lys82, 140–143, Lys163, and 168–169; these read DT, FGWD, and HR.

It belongs to the HAM1 NTPase family. As to quaternary structure, homodimer. Requires Mg(2+) as cofactor. The cofactor is Mn(2+).

It localises to the cytoplasm. It is found in the nucleus. The enzyme catalyses ITP + H2O = IMP + diphosphate + H(+). It catalyses the reaction dITP + H2O = dIMP + diphosphate + H(+). The catalysed reaction is XTP + H2O = XMP + diphosphate + H(+). Its function is as follows. Pyrophosphatase that hydrolyzes non-canonical purine nucleotides such as inosine triphosphate (ITP), deoxyinosine triphosphate (dITP) or xanthosine 5'-triphosphate (XTP) to their respective monophosphate derivatives. The enzyme does not distinguish between the deoxy- and ribose forms. Probably excludes non-canonical purines from RNA and DNA precursor pools, thus preventing their incorporation into RNA and DNA and avoiding chromosomal lesions. The chain is Inosine triphosphate pyrophosphatase from Batrachochytrium dendrobatidis (strain JAM81 / FGSC 10211) (Frog chytrid fungus).